The primary structure comprises 228 residues: Octanoyltransferase (228 aa).

Positions 40–225 (GEEAERVWLV…SFERVFDAAP (186 aa)) constitute a BPL/LPL catalytic domain. Residues 79-86 (RGGQWTYH), 156-158 (AIG), and 169-171 (GIA) contribute to the substrate site. The Acyl-thioester intermediate role is filled by Cys187.

The protein belongs to the LipB family.

It is found in the cytoplasm. The enzyme catalyses octanoyl-[ACP] + L-lysyl-[protein] = N(6)-octanoyl-L-lysyl-[protein] + holo-[ACP] + H(+). The protein operates within protein modification; protein lipoylation via endogenous pathway; protein N(6)-(lipoyl)lysine from octanoyl-[acyl-carrier-protein]: step 1/2. In terms of biological role, catalyzes the transfer of endogenously produced octanoic acid from octanoyl-acyl-carrier-protein onto the lipoyl domains of lipoate-dependent enzymes. Lipoyl-ACP can also act as a substrate although octanoyl-ACP is likely to be the physiological substrate. This is Octanoyltransferase from Acidiphilium cryptum (strain JF-5).